Here is a 940-residue protein sequence, read N- to C-terminus: Isoleucine--tRNA ligase (940 aa).

The short motif at 58 to 68 (PYANGSIHIGH) is the 'HIGH' region element. Residue E564 participates in L-isoleucyl-5'-AMP binding. The 'KMSKS' region motif lies at 605–609 (KMSKS). K608 contacts ATP. C903, C906, C923, and C926 together coordinate Zn(2+).

Belongs to the class-I aminoacyl-tRNA synthetase family. IleS type 1 subfamily. As to quaternary structure, monomer. Zn(2+) is required as a cofactor.

The protein resides in the cytoplasm. The catalysed reaction is tRNA(Ile) + L-isoleucine + ATP = L-isoleucyl-tRNA(Ile) + AMP + diphosphate. Its function is as follows. Catalyzes the attachment of isoleucine to tRNA(Ile). As IleRS can inadvertently accommodate and process structurally similar amino acids such as valine, to avoid such errors it has two additional distinct tRNA(Ile)-dependent editing activities. One activity is designated as 'pretransfer' editing and involves the hydrolysis of activated Val-AMP. The other activity is designated 'posttransfer' editing and involves deacylation of mischarged Val-tRNA(Ile). This Shewanella baltica (strain OS223) protein is Isoleucine--tRNA ligase.